A 212-amino-acid polypeptide reads, in one-letter code: Histidine biosynthesis bifunctional protein HisIE (212 aa).

Positions 1 to 109 are phosphoribosyl-AMP cyclohydrolase; it reads MRPDFHKQEL…ELIPFDDSDI (109 aa). The segment at 110 to 212 is phosphoribosyl-ATP pyrophosphohydrolase; sequence FSELEKQIID…KKEFHTRTAD (103 aa).

It in the N-terminal section; belongs to the PRA-CH family. In the C-terminal section; belongs to the PRA-PH family.

Its subcellular location is the cytoplasm. The catalysed reaction is 1-(5-phospho-beta-D-ribosyl)-ATP + H2O = 1-(5-phospho-beta-D-ribosyl)-5'-AMP + diphosphate + H(+). It catalyses the reaction 1-(5-phospho-beta-D-ribosyl)-5'-AMP + H2O = 1-(5-phospho-beta-D-ribosyl)-5-[(5-phospho-beta-D-ribosylamino)methylideneamino]imidazole-4-carboxamide. It functions in the pathway amino-acid biosynthesis; L-histidine biosynthesis; L-histidine from 5-phospho-alpha-D-ribose 1-diphosphate: step 2/9. It participates in amino-acid biosynthesis; L-histidine biosynthesis; L-histidine from 5-phospho-alpha-D-ribose 1-diphosphate: step 3/9. This Lactococcus lactis subsp. lactis (strain IL1403) (Streptococcus lactis) protein is Histidine biosynthesis bifunctional protein HisIE (hisI).